The chain runs to 111 residues: Large ribosomal subunit protein P2 (111 aa).

Over residues A63–A84 the composition is skewed to low complexity. Positions A63–D111 are disordered. Positions E85 to E97 are enriched in basic and acidic residues. S98 is subject to Phosphoserine.

As to quaternary structure, part of the ribosomal stalk of the large ribosomal subunit; P1 and P2 exist as dimers which assemble on the P0 scaffold.

Plays an important role in the elongation step of protein synthesis. This is Large ribosomal subunit protein P2 from Artemia salina (Brine shrimp).